A 485-amino-acid polypeptide reads, in one-letter code: Proline--tRNA ligase (485 aa).

The protein belongs to the class-II aminoacyl-tRNA synthetase family. ProS type 3 subfamily. As to quaternary structure, homodimer.

It localises to the cytoplasm. The catalysed reaction is tRNA(Pro) + L-proline + ATP = L-prolyl-tRNA(Pro) + AMP + diphosphate. Functionally, catalyzes the attachment of proline to tRNA(Pro) in a two-step reaction: proline is first activated by ATP to form Pro-AMP and then transferred to the acceptor end of tRNA(Pro). In Aeropyrum pernix (strain ATCC 700893 / DSM 11879 / JCM 9820 / NBRC 100138 / K1), this protein is Proline--tRNA ligase.